We begin with the raw amino-acid sequence, 148 residues long: Small ribosomal subunit protein bS6 (148 aa).

Positions 96–148 (HEEGQSAMLTRRDDRRERDGDDRPRRREGGFDRGDRGDRSPRRPRDNEAGEGA) are disordered.

The protein belongs to the bacterial ribosomal protein bS6 family.

Its function is as follows. Binds together with bS18 to 16S ribosomal RNA. The chain is Small ribosomal subunit protein bS6 from Brucella suis (strain ATCC 23445 / NCTC 10510).